The chain runs to 36 residues: Cytochrome b6-f complex subunit 5 (36 aa).

A helical transmembrane segment spans residues 5 to 25 (LLSGIVLGLIPITILGLLMAA).

Belongs to the PetG family. As to quaternary structure, the 4 large subunits of the cytochrome b6-f complex are cytochrome b6, subunit IV (17 kDa polypeptide, PetD), cytochrome f and the Rieske protein, while the 4 small subunits are PetG, PetL, PetM and PetN. The complex functions as a dimer.

It localises to the plastid. The protein localises to the chloroplast thylakoid membrane. Functionally, component of the cytochrome b6-f complex, which mediates electron transfer between photosystem II (PSII) and photosystem I (PSI), cyclic electron flow around PSI, and state transitions. PetG is required for either the stability or assembly of the cytochrome b6-f complex. In Cyanidioschyzon merolae (strain NIES-3377 / 10D) (Unicellular red alga), this protein is Cytochrome b6-f complex subunit 5.